A 1230-amino-acid polypeptide reads, in one-letter code: Basic-leucine zipper transcription factor A (1230 aa).

4 disordered regions span residues 65–108, 180–233, 270–310, and 422–578; these read LYLS…NIIN, LNGN…QQHQ, QQLK…PSTQ, and HQQN…RKKD. Composition is skewed to low complexity over residues 69-108, 192-233, 270-287, 295-310, and 422-447; these read NSSNNTNNNNNNNNNNNNNNNNNNNNNNNNNNNNNNNIIN, NNFS…QQHQ, QQLKQQQPQQHPIQSPQP, PSLQQHQTYSYTPSTQ, and HQQNIQQHQNQNQQQLQLPQPQQQQH. Composition is skewed to polar residues over residues 448–458 and 466–475; these read KSTPPTQNTPP and TPTLTTNGKG. A compositionally biased stretch (low complexity) spans 476–503; it reads SKSTPPTTTTTTTTTTSSSSSSSSSSSS. Residues 523–537 show a composition bias toward basic residues; the sequence is PHHHHHHHNNHHHHH. Residues 541–554 show a composition bias toward acidic residues; it reads FSDENDEEFIDENE. A bZIP domain is found at 555–618; sequence DKSKNKSRSS…LGDVMRPDFD (64 aa). Residues 556–586 form a basic motif region; it reads KSKNKSRSSQNIASRNYRQRKKDHISEVEFK. Positions 562 to 571 are enriched in polar residues; it reads RSSQNIASRN. The tract at residues 590 to 604 is leucine-zipper; sequence LSLENERLKQENHLL. Positions 728–753 form a coiled coil; the sequence is LKIDMELRTERDQLDREIKELFLKKI. Disordered regions lie at residues 772–869 and 1025–1230; these read TFNS…EHNK and NYTN…TPNI. Composition is skewed to low complexity over residues 774 to 803 and 810 to 831; these read NSESDYPSSPSSASNSSNSPPTSSPTIITP and NNQNNQNNNQMINSNSNNSNNN. Residues 832 to 845 show a composition bias toward basic residues; the sequence is SHHHHHHHHSHLHG. Positions 1025 to 1042 are enriched in polar residues; that stretch reads NYTNSPLITSSPSQLTPN. Composition is skewed to low complexity over residues 1052–1146 and 1153–1193; these read NNNN…NNGN and QALH…SPSS.

Belongs to the bZIP family. In terms of assembly, binds DNA as a dimer. Heterodimerizes with dimB; in vitro. Also able to form homodimer; in vitro.

It localises to the nucleus. In terms of biological role, transcriptional regulator involved in DIF-1 signaling. DIF-1 (Differentiation Inducing Factor-1) is a signal molecule involved in the differentiation of pstO (prestalk-O) cells. Functions both as an activator of prestalk gene expression and a repressor of prespore gene expression. This Dictyostelium discoideum (Social amoeba) protein is Basic-leucine zipper transcription factor A (dimA).